The primary structure comprises 440 residues: Asparagine--tRNA ligase (440 aa).

Belongs to the class-II aminoacyl-tRNA synthetase family. As to quaternary structure, homodimer.

Its subcellular location is the cytoplasm. The catalysed reaction is tRNA(Asn) + L-asparagine + ATP = L-asparaginyl-tRNA(Asn) + AMP + diphosphate + H(+). This is Asparagine--tRNA ligase from Roseiflexus sp. (strain RS-1).